A 66-amino-acid chain; its full sequence is Translational regulator CsrA (66 aa).

Belongs to the CsrA/RsmA family. As to quaternary structure, homodimer; the beta-strands of each monomer intercalate to form a hydrophobic core, while the alpha-helices form wings that extend away from the core.

It localises to the cytoplasm. Functionally, a key translational regulator that binds mRNA to regulate translation initiation and/or mRNA stability. Mediates global changes in gene expression, shifting from rapid growth to stress survival by linking envelope stress, the stringent response and the catabolite repression systems. Usually binds in the 5'-UTR; binding at or near the Shine-Dalgarno sequence prevents ribosome-binding, repressing translation, binding elsewhere in the 5'-UTR can activate translation and/or stabilize the mRNA. Its function is antagonized by small RNA(s). In Alkalilimnicola ehrlichii (strain ATCC BAA-1101 / DSM 17681 / MLHE-1), this protein is Translational regulator CsrA.